The primary structure comprises 273 residues: Nucleotide-binding protein TT_C1664 (273 aa).

8–15 lines the ATP pocket; it reads GLSGAGKT. Residue 57 to 60 participates in GTP binding; that stretch reads DARA.

This sequence belongs to the RapZ-like family.

Displays ATPase and GTPase activities. The polypeptide is Nucleotide-binding protein TT_C1664 (Thermus thermophilus (strain ATCC BAA-163 / DSM 7039 / HB27)).